The following is a 658-amino-acid chain: UvrABC system protein B (658 aa).

The Helicase ATP-binding domain maps to 25–416 (QFIHNGAQYS…QEHIAEQIIR (392 aa)). 38–45 (GVTGSGKT) is an ATP binding site. The Beta-hairpin motif lies at 91–114 (HFDYYQPEAYIPRRDLFIEKDSSI). The Helicase C-terminal domain maps to 433–607 (AVLDLYDEIK…ELKIESSGLS (175 aa)). One can recognise a UVR domain in the interval 623–658 (ESIIKELNIKMHQAAKALEFEEAARLRDEIARIRTM).

This sequence belongs to the UvrB family. As to quaternary structure, forms a heterotetramer with UvrA during the search for lesions. Interacts with UvrC in an incision complex.

Its subcellular location is the cytoplasm. In terms of biological role, the UvrABC repair system catalyzes the recognition and processing of DNA lesions. A damage recognition complex composed of 2 UvrA and 2 UvrB subunits scans DNA for abnormalities. Upon binding of the UvrA(2)B(2) complex to a putative damaged site, the DNA wraps around one UvrB monomer. DNA wrap is dependent on ATP binding by UvrB and probably causes local melting of the DNA helix, facilitating insertion of UvrB beta-hairpin between the DNA strands. Then UvrB probes one DNA strand for the presence of a lesion. If a lesion is found the UvrA subunits dissociate and the UvrB-DNA preincision complex is formed. This complex is subsequently bound by UvrC and the second UvrB is released. If no lesion is found, the DNA wraps around the other UvrB subunit that will check the other stand for damage. The chain is UvrABC system protein B from Helicobacter hepaticus (strain ATCC 51449 / 3B1).